Reading from the N-terminus, the 352-residue chain is Histidinol-phosphate aminotransferase (352 aa).

Position 208 is an N6-(pyridoxal phosphate)lysine (Lys-208).

It belongs to the class-II pyridoxal-phosphate-dependent aminotransferase family. Histidinol-phosphate aminotransferase subfamily. In terms of assembly, homodimer. Requires pyridoxal 5'-phosphate as cofactor.

It catalyses the reaction L-histidinol phosphate + 2-oxoglutarate = 3-(imidazol-4-yl)-2-oxopropyl phosphate + L-glutamate. The protein operates within amino-acid biosynthesis; L-histidine biosynthesis; L-histidine from 5-phospho-alpha-D-ribose 1-diphosphate: step 7/9. This is Histidinol-phosphate aminotransferase from Streptococcus sanguinis (strain SK36).